A 449-amino-acid polypeptide reads, in one-letter code: CBL-interacting protein kinase 31 (449 aa).

Positions Tyr20–Phe275 constitute a Protein kinase domain. ATP contacts are provided by residues Ile26–Val34 and Lys49. The active-site Proton acceptor is the Asp143. Positions Asp161 to Glu190 are activation loop. Positions Asp313–Glu337 constitute an NAF domain.

The protein belongs to the protein kinase superfamily. CAMK Ser/Thr protein kinase family. SNF1 subfamily. In terms of assembly, may interact with CBL3. Mn(2+) is required as a cofactor. Autophosphorylated. As to expression, highly expressed in leaf blade and leaf sheath, but not in other tissues.

It carries out the reaction L-seryl-[protein] + ATP = O-phospho-L-seryl-[protein] + ADP + H(+). The enzyme catalyses L-threonyl-[protein] + ATP = O-phospho-L-threonyl-[protein] + ADP + H(+). In terms of biological role, involved in cold stress tolerance. CIPK serine-threonine protein kinases interact with CBL proteins. Binding of a CBL protein to the regulatory NAF domain of CIPK protein lead to the activation of the kinase in a calcium-dependent manner. This chain is CBL-interacting protein kinase 31 (CIPK31), found in Oryza sativa subsp. japonica (Rice).